A 410-amino-acid polypeptide reads, in one-letter code: Homeobox protein Hox-A3a (410 aa).

The disordered stretch occupies residues 79-126 (VTDTSDNKQPPTAPSGPSSPSSLNQIPNIDSAAKNPVHVSPTPSTRKH). Residues 127-132 (IFPWMK) carry the Antp-type hexapeptide motif. A DNA-binding region (homeobox) is located at residues 163–222 (SKRARTAYTSAQLVELEKEFHFNRYLCRPRRVEMANLLNLTERQIKIWFQNRRMKYKKDQ). Positions 222–249 (QKGLGMMPSPGAQSPHSPVSLSSGGGGG) are disordered.

It belongs to the Antp homeobox family.

The protein localises to the nucleus. Sequence-specific transcription factor which is part of a developmental regulatory system that provides cells with specific positional identities on the anterior-posterior axis. The chain is Homeobox protein Hox-A3a (hoxa3a) from Danio rerio (Zebrafish).